A 577-amino-acid chain; its full sequence is Glycine--tRNA ligase (577 aa).

2 residues coordinate substrate: arginine 98 and glutamate 164. ATP is bound by residues 196 to 198 (RNE), 206 to 211 (IRLREF), 328 to 329 (EC), and 451 to 454 (GIDR). Residue 211–215 (FTQAE) participates in substrate binding. 447–451 (EPSYG) serves as a coordination point for substrate.

It belongs to the class-II aminoacyl-tRNA synthetase family.

The protein resides in the cytoplasm. It carries out the reaction tRNA(Gly) + glycine + ATP = glycyl-tRNA(Gly) + AMP + diphosphate. Functionally, catalyzes the attachment of glycine to tRNA(Gly). The polypeptide is Glycine--tRNA ligase (Methanocaldococcus jannaschii (strain ATCC 43067 / DSM 2661 / JAL-1 / JCM 10045 / NBRC 100440) (Methanococcus jannaschii)).